A 155-amino-acid polypeptide reads, in one-letter code: Endoribonuclease YbeY (155 aa).

Residues His-120, His-124, and His-130 each contribute to the Zn(2+) site.

The protein belongs to the endoribonuclease YbeY family. Zn(2+) serves as cofactor.

It is found in the cytoplasm. In terms of biological role, single strand-specific metallo-endoribonuclease involved in late-stage 70S ribosome quality control and in maturation of the 3' terminus of the 16S rRNA. The protein is Endoribonuclease YbeY of Borreliella burgdorferi (strain ATCC 35210 / DSM 4680 / CIP 102532 / B31) (Borrelia burgdorferi).